The sequence spans 506 residues: Bone morphogenetic protein 6 (506 aa).

The first 20 residues, Met1–Ser20, serve as a signal peptide directing secretion. Residues Cys21 to Arg367 constitute a propeptide that is removed on maturation. Disordered stretches follow at residues Ala44–Leu64, Pro87–Ser125, and Lys139–Ser195. The span at Leu96 to Gln112 shows a compositional bias: low complexity. Residues Asp140–Glu153 show a composition bias toward acidic residues. N-linked (GlcNAc...) asparagine glycosylation is found at Asn234, Asn262, Asn379, Asn397, and Asn447. The segment at Thr366 to Asn397 is disordered. Over residues Asp386–Asn397 the composition is skewed to polar residues. Cystine bridges form between Cys405/Cys471, Cys434/Cys503, and Cys438/Cys505.

It belongs to the TGF-beta family. Interacts with SOSTDC1. Interacts (when glycosylated) with type I receptor ACVR1; the interaction may induce HAMP expression. Interacts with type II receptor ACVR2B. Interacts with Hemojuvelin/HJV. Interacts with ERFE; the interaction inhibits BMP-induced transcription of HAMP. Interacts with BMPR1A/ALK3. Forms heterodimers with BMP2 in vitro; the heterodimer then binds to its receptor BMPR1A /ALK3 and may induce HAMP expression.

The protein localises to the secreted. Its function is as follows. Growth factor of the TGF-beta superfamily that plays essential roles in many developmental processes including cartilage and bone formation. Also plays an important role in the regulation of HAMP/hepcidin expression and iron metabolism by acting as a ligand for hemojuvelin/HJV. Also acts to promote expression of HAMP, potentially via the interaction with its receptor BMPR1A/ALK3. Initiates the canonical BMP signaling cascade by associating with type I receptor ACVR1 and type II receptor ACVR2B. In turn, ACVR1 propagates signal by phosphorylating SMAD1/5/8 that travel to the nucleus and act as activators and repressors of transcription of target. Can also signal through non-canonical pathway such as TAZ-Hippo signaling cascade to modulate VEGF signaling by regulating VEGFR2 expression. This chain is Bone morphogenetic protein 6 (Bmp6), found in Rattus norvegicus (Rat).